Here is a 674-residue protein sequence, read N- to C-terminus: ATP-dependent DNA helicase Hel308 (674 aa).

ATP-binding positions include Gln-27 and 44–51; that span reads VPTAAGKT. Residues 31–197 enclose the Helicase ATP-binding domain; that stretch reads IEQIRKGRNV…WLDASLIKSD (167 aa). The DEAH box signature appears at 142–145; sequence DEIH. The Helicase C-terminal domain maps to 224-411; that stretch reads SINQIIRETV…EAKVRFNTLA (188 aa).

Belongs to the helicase family. Hel308 subfamily. As to quaternary structure, monomer.

The catalysed reaction is Couples ATP hydrolysis with the unwinding of duplex DNA by translocating in the 3'-5' direction.. It carries out the reaction ATP + H2O = ADP + phosphate + H(+). Functionally, DNA-dependent ATPase and 3'-5' DNA helicase that may be involved in repair of stalled replication forks. This Thermoplasma acidophilum (strain ATCC 25905 / DSM 1728 / JCM 9062 / NBRC 15155 / AMRC-C165) protein is ATP-dependent DNA helicase Hel308.